We begin with the raw amino-acid sequence, 510 residues long: MTPEAAYQNLLEFQRETAYLASLGALAAWDQRTMIPKKGHEHRARQMAALARLLHQRMTDPRIGEWLEKVEGSPLVQDPLSDAAVNVREWRQAYERARAIPERLAVELAQAESEAESFWEEARPRDDWRGFLPYLKRVYALTKEKAEVLFALPPAPGDPPYGELYDALLDGYEPGMRARELLPLFAELKEGLKGLLDRILGSGKRPDTSILHRPYPVEAQRRFALELLSACGYDLEAGRLDPTAHPFEIAIGPGDVRITTRYYEDFFNAGIFGTLHEMGHALYEQGLPKEHWGTPRGDAVSLGVHESQSRTWENLVGRSLGFWERFFPRAREVFASLGDVSLEDFHFAVNAVEPSLIRVEADEVTYNLHILVRLELELALFRGELSPEDLPEAWAEKYRDHLGVAPKDYKDGVMQDVHWAGGLFGYFPTYTLGNLYAAQFFQKAEAELGPLEPRFARGEFQPFLDWTRARIHAEGSRFRPRVLVERVTGEAPSARPFLAYLEKKYAALYG.

Positions 3-506 (PEAAYQNLLE…FLAYLEKKYA (504 aa)) constitute a Peptidase M32 domain. An HPF motif is present at residues 245 to 247 (HPF). The short motif at 255–259 (DVRIT) is the DXRXT element. His276 is a binding site for Zn(2+). An HEXXH motif is present at residues 276-280 (HEMGH). Catalysis depends on Glu277, which acts as the Proton donor/acceptor. Zn(2+) is bound by residues His280 and Glu306. The short motif at 305–308 (HESQ) is the HES/GQ element. The I/NRXXA/SD signature appears at 357 to 362 (IRVEAD). The GXXQDXHW motif lies at 412 to 419 (GVMQDVHW).

The protein belongs to the peptidase M32 family. In terms of assembly, homodimer. Requires Zn(2+) as cofactor.

The enzyme catalyses Release of a C-terminal amino acid with broad specificity, except for -Pro.. Functionally, broad specificity carboxypetidase that releases amino acids sequentially from the C-terminus, including neutral, aromatic, polar and basic residues, but not Pro. Has lower activity with substrates ending with Gly or Glu. This Thermus thermophilus (strain ATCC 27634 / DSM 579 / HB8) protein is Thermostable carboxypeptidase 1.